We begin with the raw amino-acid sequence, 248 residues long: Ureidoacrylate amidohydrolase RutB (248 aa).

Asp-41 serves as the catalytic Proton acceptor. Lys-150 is an active-site residue. The Nucleophile role is filled by Cys-183.

Belongs to the isochorismatase family. RutB subfamily.

It carries out the reaction (Z)-3-ureidoacrylate + H2O + H(+) = (Z)-3-aminoacrylate + NH4(+) + CO2. It catalyses the reaction (Z)-3-ureidoacrylate + H2O = (Z)-3-aminoacrylate + carbamate + H(+). The enzyme catalyses (Z)-2-methylureidoacrylate + H2O + H(+) = (Z)-2-methylaminoacrylate + NH4(+) + CO2. Hydrolyzes ureidoacrylate to form aminoacrylate and carbamate. The carbamate hydrolyzes spontaneously, thereby releasing one of the nitrogen atoms of the pyrimidine ring as ammonia and one of its carbon atoms as CO2. This Methylorubrum extorquens (strain ATCC 14718 / DSM 1338 / JCM 2805 / NCIMB 9133 / AM1) (Methylobacterium extorquens) protein is Ureidoacrylate amidohydrolase RutB.